Consider the following 266-residue polypeptide: Tryptophan synthase alpha chain (266 aa).

Catalysis depends on proton acceptor residues E49 and D60.

Belongs to the TrpA family. Tetramer of two alpha and two beta chains.

It carries out the reaction (1S,2R)-1-C-(indol-3-yl)glycerol 3-phosphate + L-serine = D-glyceraldehyde 3-phosphate + L-tryptophan + H2O. It participates in amino-acid biosynthesis; L-tryptophan biosynthesis; L-tryptophan from chorismate: step 5/5. Functionally, the alpha subunit is responsible for the aldol cleavage of indoleglycerol phosphate to indole and glyceraldehyde 3-phosphate. In Opitutus terrae (strain DSM 11246 / JCM 15787 / PB90-1), this protein is Tryptophan synthase alpha chain.